The primary structure comprises 224 residues: Response regulator protein GraR (224 aa).

The 114-residue stretch at 2–115 (QILLVEDDNT…VLIAKLQAIY (114 aa)) folds into the Response regulatory domain. At Asp-51 the chain carries 4-aspartylphosphate. The ompR/PhoB-type DNA-binding region spans 126-224 (KRTLSWQDAT…KVGKGYLAHE (99 aa)).

In terms of processing, phosphorylated by GraS.

It localises to the cytoplasm. Member of the two-component regulatory system GraR/GraS involved in resistance against cationic antimicrobial peptides (CAMPs). The sequence is that of Response regulator protein GraR (graR) from Staphylococcus epidermidis (strain ATCC 35984 / DSM 28319 / BCRC 17069 / CCUG 31568 / BM 3577 / RP62A).